A 465-amino-acid chain; its full sequence is 3-isopropylmalate dehydratase large subunit (465 aa).

Residues cysteine 347, cysteine 407, and cysteine 410 each contribute to the [4Fe-4S] cluster site. The interval 416–443 (DTLRPGERSASTSNRNFEGRQGPGGRTH) is disordered.

The protein belongs to the aconitase/IPM isomerase family. LeuC type 1 subfamily. In terms of assembly, heterodimer of LeuC and LeuD. [4Fe-4S] cluster is required as a cofactor.

It catalyses the reaction (2R,3S)-3-isopropylmalate = (2S)-2-isopropylmalate. The protein operates within amino-acid biosynthesis; L-leucine biosynthesis; L-leucine from 3-methyl-2-oxobutanoate: step 2/4. In terms of biological role, catalyzes the isomerization between 2-isopropylmalate and 3-isopropylmalate, via the formation of 2-isopropylmaleate. The protein is 3-isopropylmalate dehydratase large subunit of Frankia alni (strain DSM 45986 / CECT 9034 / ACN14a).